The sequence spans 356 residues: Dihydroorotate dehydrogenase (quinone) (356 aa).

Residues 66-70 (AGFDK) and threonine 90 contribute to the FMN site. Residue lysine 70 coordinates substrate. 115 to 119 (NRMGF) lines the substrate pocket. FMN is bound by residues asparagine 143 and asparagine 176. Asparagine 176 serves as a coordination point for substrate. Serine 179 (nucleophile) is an active-site residue. Residue asparagine 181 coordinates substrate. FMN contacts are provided by lysine 212 and threonine 240. 241–242 (NT) is a substrate binding site. FMN-binding positions include glycine 264, glycine 293, and 314–315 (YT).

The protein belongs to the dihydroorotate dehydrogenase family. Type 2 subfamily. As to quaternary structure, monomer. FMN is required as a cofactor.

It localises to the cell membrane. It catalyses the reaction (S)-dihydroorotate + a quinone = orotate + a quinol. The protein operates within pyrimidine metabolism; UMP biosynthesis via de novo pathway; orotate from (S)-dihydroorotate (quinone route): step 1/1. Functionally, catalyzes the conversion of dihydroorotate to orotate with quinone as electron acceptor. This Mycobacterium leprae (strain TN) protein is Dihydroorotate dehydrogenase (quinone) (pyrD).